We begin with the raw amino-acid sequence, 623 residues long: Protein skinhead-1 (623 aa).

4 disordered regions span residues 1–29 (MGGS…FSSV), 158–184 (TEHP…YEYS), 421–451 (YQST…GSVT), and 467–557 (QRHS…LASD). Ser-164 carries the post-translational modification Phosphoserine; by pmk-1. Residues 173-184 (ERPTTSSRYEYS) are compositionally biased toward polar residues. Position 430 is a phosphoserine; by pmk-1 (Ser-430). 3 stretches are compositionally biased toward low complexity: residues 435 to 449 (GSSG…SPGS), 472 to 498 (SDCT…ESST), and 511 to 529 (PSSG…SQSS). The basic motif stretch occupies residues 540-623 (SGQRKRGRQS…DRHDKMSHYI (84 aa)).

Belongs to the bZIP family. Skn1 subfamily. As to quaternary structure, monomer. Interacts with GATA factor elt-3; interaction may enhance transcriptional activation of target genes. In terms of assembly, interacts with pgma-5. Interacts with transcription factor mxl-3 (via N-terminus). In terms of processing, cleaved by the aspartic protease ddi-1. In terms of tissue distribution, postembryonic intestinal cells.

Its subcellular location is the nucleus. The protein localises to the cytoplasm. It is found in the mitochondrion. Its function is as follows. Transcription factor. Required to specify the fate of ventral blastomeres in the early embryo, and postembryonically for the development of the intestine. Directly regulates expression of zygotically expressed med-1 and med-2 to direct mesendoderm development. In response to oxidative stress and anoxia, required to up-regulate expression of stl-1 mRNA. Involved in regulating innate immunity, acting downstream of the pmk-1 p38/MAPK pathway and probably also downstream of nipi-3. Required for the up-regulation of phase II detoxification genes, including gcs-1 and several glutathione-S-transferase mRNAs in response to oxidative stress generated during pathogenic bacterial infection. Modulates oxidative stress responses in concert with transcription factors such as hcf-1 and elt-3. Regulates the transcription of genes associated with metabolism in response to changes in nutrient availability. In neurons, involved in mitochondrial fusion and behavioral recovery during reoxygenation. Required for riok-1 mRNA expression in the intestine. Downstream of the let-60/Ras, mek-2 and pmk-1 pathway, positively regulates lifespan probably by preventing transcription of insulin-like peptides such as ins-39. Prevents degeneration of dopaminergic CEP neurons in response to high Al(3+) or Mn(2+) levels, probably by promoting the expression of glutathione-S-transferase gst-1. Directed by the ER-associated degradation pathway (ERAD), mediates proteasomal homeostasis by regulating the expression of proteasomal subunits such as rpt-3 to confer resistance to proteasomal dysfunction. The polypeptide is Protein skinhead-1 (skn-1) (Caenorhabditis elegans).